Consider the following 437-residue polypeptide: UDP-N-acetylmuramate--L-alanine ligase (437 aa).

An ATP-binding site is contributed by 108 to 114 (GAHGKTS).

This sequence belongs to the MurCDEF family.

It is found in the cytoplasm. It catalyses the reaction UDP-N-acetyl-alpha-D-muramate + L-alanine + ATP = UDP-N-acetyl-alpha-D-muramoyl-L-alanine + ADP + phosphate + H(+). It functions in the pathway cell wall biogenesis; peptidoglycan biosynthesis. Functionally, cell wall formation. This Staphylococcus carnosus (strain TM300) protein is UDP-N-acetylmuramate--L-alanine ligase.